We begin with the raw amino-acid sequence, 427 residues long: Transcription termination factor Rho (427 aa).

One can recognise a Rho RNA-BD domain in the interval 51–125 (LLFMEGVLEI…LHVEAVNGDD (75 aa)). ATP contacts are provided by residues 168–173 (GFGQRG), 180–185 (KAGKTM), and R211.

This sequence belongs to the Rho family. In terms of assembly, homohexamer. The homohexamer assembles into an open ring structure.

In terms of biological role, facilitates transcription termination by a mechanism that involves Rho binding to the nascent RNA, activation of Rho's RNA-dependent ATPase activity, and release of the mRNA from the DNA template. The chain is Transcription termination factor Rho from Bacillus subtilis (strain 168).